Consider the following 524-residue polypeptide: 2-isopropylmalate synthase (524 aa).

The Pyruvate carboxyltransferase domain maps to 12–274; sequence VIIFDTTLRD…WNNIETTMLT (263 aa). Residues aspartate 21, histidine 209, histidine 211, and asparagine 245 each contribute to the Mn(2+) site. The interval 398–524 is regulatory domain; that stretch reads KLNSLTVIAG…EAVPAVAAAG (127 aa).

It belongs to the alpha-IPM synthase/homocitrate synthase family. LeuA type 1 subfamily. Homodimer. Mn(2+) is required as a cofactor.

It localises to the cytoplasm. It catalyses the reaction 3-methyl-2-oxobutanoate + acetyl-CoA + H2O = (2S)-2-isopropylmalate + CoA + H(+). The protein operates within amino-acid biosynthesis; L-leucine biosynthesis; L-leucine from 3-methyl-2-oxobutanoate: step 1/4. Functionally, catalyzes the condensation of the acetyl group of acetyl-CoA with 3-methyl-2-oxobutanoate (2-ketoisovalerate) to form 3-carboxy-3-hydroxy-4-methylpentanoate (2-isopropylmalate). The chain is 2-isopropylmalate synthase from Rhodopseudomonas palustris (strain HaA2).